Here is a 547-residue protein sequence, read N- to C-terminus: Cellodextrinase (547 aa).

Residue D148 is the Nucleophile of the active site. Residues H474, D520, and E529 contribute to the active site.

This sequence belongs to the glycosyl hydrolase 9 (cellulase E) family.

It is found in the secreted. The catalysed reaction is Endohydrolysis of (1-&gt;4)-beta-D-glucosidic linkages in cellulose, lichenin and cereal beta-D-glucans.. Is not inhibited by methylcellulose. In terms of biological role, glycoside hydrolase that rapidly hydrolyzes short-chain cellodextrins to yield either cellobiose or cellobiose and glucose as end products; cellobiose is not hydrolyzed further. Also shows limited activity against endoglucanase specific substrates (carboxymethylcellulose (CMC), lichenan, laminarin and xylan). The protein is Cellodextrinase of Butyrivibrio fibrisolvens.